Reading from the N-terminus, the 83-residue chain is Toxin CjTL8 (83 aa).

The signal sequence occupies residues 1–20 (MSSAIKILALLMVLVALAQA). A propeptide spanning residues 21 to 44 (KPRKDYRAYPDFDDKSVILEDDKR) is cleaved from the precursor. Position 81 is a phenylalanine amide (Phe-81).

Post-translationally, contains 3 disulfide bonds.

It is found in the secreted. The protein localises to the nematocyst. In vivo, induces immediate paralysis on shrimps (C.multidentata), followed by death when high doses are injected. No activity is observed when injected into fly larvae (M.domestica). In Epiactis japonica (Sea anemone), this protein is Toxin CjTL8.